A 428-amino-acid chain; its full sequence is Isocitrate dehydrogenase [NADP], mitochondrial (428 aa).

Residues Met1–Ala16 constitute a mitochondrion transit peptide. Residues Thr91 to Thr93 and Arg98 each bind NADP(+). Thr93 lines the substrate pocket. Substrate-binding positions include Ser110–Arg116, Arg125, and Arg148. Asp269 is a Mn(2+) binding site. Lys277 lines the NADP(+) pocket. Residue Asp292 participates in Mn(2+) binding. NADP(+)-binding positions include Gly327–His332 and Asn345.

This sequence belongs to the isocitrate and isopropylmalate dehydrogenases family. As to quaternary structure, homodimer. The cofactor is Mg(2+). Mn(2+) serves as cofactor.

Its subcellular location is the mitochondrion. It carries out the reaction D-threo-isocitrate + NADP(+) = 2-oxoglutarate + CO2 + NADPH. With respect to regulation, the enzyme is subject to end product inhibition by NADPH and 2-oxoglutarate. Mitochondrial IDP1 may regulate flux through the tricarboxylic acid cycle and respiration. Its probably critical function is the production of NADPH. The chain is Isocitrate dehydrogenase [NADP], mitochondrial (IDP1) from Saccharomyces cerevisiae (strain ATCC 204508 / S288c) (Baker's yeast).